A 259-amino-acid chain; its full sequence is Small ribosomal subunit protein eS1 (259 aa).

The protein belongs to the eukaryotic ribosomal protein eS1 family. As to quaternary structure, component of the small ribosomal subunit. Mature ribosomes consist of a small (40S) and a large (60S) subunit. The 40S subunit contains about 33 different proteins and 1 molecule of RNA (18S). The 60S subunit contains about 49 different proteins and 3 molecules of RNA (25S, 5.8S and 5S).

Its subcellular location is the cytoplasm. The polypeptide is Small ribosomal subunit protein eS1 (Monosiga brevicollis (Choanoflagellate)).